Here is a 372-residue protein sequence, read N- to C-terminus: D-alanine--D-alanine ligase (372 aa).

The region spanning 145 to 349 is the ATP-grasp domain; sequence KTVLRAGGIP…CPNLLDQLIE (205 aa). ATP is bound at residue 176 to 231; it reads DRWGTSELFVKAVSLGSSVATLPVKTETEFTKAVKEVFRYDDRLMVEPRIRGREIE. 3 residues coordinate Mg(2+): aspartate 303, glutamate 316, and asparagine 318.

Belongs to the D-alanine--D-alanine ligase family. Mg(2+) serves as cofactor. Requires Mn(2+) as cofactor.

It localises to the cytoplasm. It carries out the reaction 2 D-alanine + ATP = D-alanyl-D-alanine + ADP + phosphate + H(+). The protein operates within cell wall biogenesis; peptidoglycan biosynthesis. Functionally, cell wall formation. The polypeptide is D-alanine--D-alanine ligase (Coxiella burnetii (strain RSA 331 / Henzerling II)).